The primary structure comprises 562 residues: Urocanate hydratase (562 aa).

Residues 52–53, Gln-130, 176–178, Glu-196, Arg-201, 242–243, 263–267, 273–274, and Tyr-322 each bind NAD(+); these read GG, GMG, NA, QTSAH, and YL. The active site involves Cys-410. NAD(+) is bound at residue Gly-492.

This sequence belongs to the urocanase family. Requires NAD(+) as cofactor.

The protein resides in the cytoplasm. It carries out the reaction 4-imidazolone-5-propanoate = trans-urocanate + H2O. The protein operates within amino-acid degradation; L-histidine degradation into L-glutamate; N-formimidoyl-L-glutamate from L-histidine: step 2/3. Its function is as follows. Catalyzes the conversion of urocanate to 4-imidazolone-5-propionate. The chain is Urocanate hydratase from Shewanella pealeana (strain ATCC 700345 / ANG-SQ1).